The sequence spans 462 residues: tRNA-2-methylthio-N(6)-dimethylallyladenosine synthase (462 aa).

Residues 2–117 form the MTTase N-terminal domain; that stretch reads KRYFIHTFGC…LPDIIGRVSA (116 aa). [4Fe-4S] cluster is bound by residues cysteine 11, cysteine 47, cysteine 80, cysteine 157, cysteine 161, and cysteine 164. In terms of domain architecture, Radical SAM core spans 143–372; it reads SRGKVTEFVT…QKLQRRISGE (230 aa). The TRAM domain maps to 375-437; sequence AALVGSEVEV…PNQLAGKQVA (63 aa).

Belongs to the methylthiotransferase family. MiaB subfamily. As to quaternary structure, monomer. Requires [4Fe-4S] cluster as cofactor.

It is found in the cytoplasm. It catalyses the reaction N(6)-dimethylallyladenosine(37) in tRNA + (sulfur carrier)-SH + AH2 + 2 S-adenosyl-L-methionine = 2-methylsulfanyl-N(6)-dimethylallyladenosine(37) in tRNA + (sulfur carrier)-H + 5'-deoxyadenosine + L-methionine + A + S-adenosyl-L-homocysteine + 2 H(+). Functionally, catalyzes the methylthiolation of N6-(dimethylallyl)adenosine (i(6)A), leading to the formation of 2-methylthio-N6-(dimethylallyl)adenosine (ms(2)i(6)A) at position 37 in tRNAs that read codons beginning with uridine. The protein is tRNA-2-methylthio-N(6)-dimethylallyladenosine synthase of Myxococcus xanthus (strain DK1622).